A 218-amino-acid chain; its full sequence is uncharacterized protein (218 aa).

Residues 111–193 (NSIYLVEGDF…ITKVIEIKAA (83 aa)) form the Toprim domain.

This is an uncharacterized protein from Mycoplasma genitalium (strain ATCC 33530 / DSM 19775 / NCTC 10195 / G37) (Mycoplasmoides genitalium).